Consider the following 908-residue polypeptide: Protein O-mannosyltransferase 1 (908 aa).

Disordered regions lie at residues 1 to 85 (MYNN…SAIN) and 115 to 160 (GSVE…SGSR). The segment covering 21–31 (QRRKTTTRSRS) has biased composition (basic residues). 2 stretches are compositionally biased toward polar residues: residues 39-54 (CTSE…NGAQ) and 132-149 (LTAT…SPTI). The chain crosses the membrane as a helical span at residues 190–210 (FTVNLSIDLFSWTLFLLAFCT). The N-linked (GlcNAc...) asparagine glycan is linked to Asn265. The next 5 membrane-spanning stretches (helical) occupy residues 279 to 299 (VPIF…APAV), 311 to 328 (WAAA…SLLT), 331 to 351 (RFVL…ACLL), 370 to 390 (AGVL…ALAL), and 418 to 438 (LSRL…VFYV). MIR domains follow at residues 473 to 534 (PLAV…VKRP), 545 to 602 (PDVI…VEIL), and 608 to 664 (GDSW…VEEH). 4 consecutive transmembrane segments (helical) span residues 749 to 769 (VLIW…LAFY), 788 to 808 (FLMA…PYYF), 813 to 833 (LFLH…CFVV), and 857 to 877 (LALL…LPLS).

Belongs to the glycosyltransferase 39 family. Interacts with tw/POMT2.

The protein localises to the endoplasmic reticulum membrane. It catalyses the reaction a di-trans,poly-cis-dolichyl beta-D-mannosyl phosphate + L-seryl-[protein] = 3-O-(alpha-D-mannosyl)-L-seryl-[protein] + a di-trans,poly-cis-dolichyl phosphate + H(+). The catalysed reaction is a di-trans,poly-cis-dolichyl beta-D-mannosyl phosphate + L-threonyl-[protein] = 3-O-(alpha-D-mannosyl)-L-threonyl-[protein] + a di-trans,poly-cis-dolichyl phosphate + H(+). It participates in protein modification; protein glycosylation. Functionally, rt/POMT1 and tw/POMT2 function as a protein O-mannosyltransferase in association with each other to generate and maintain normal muscle development. In Drosophila pseudoobscura pseudoobscura (Fruit fly), this protein is Protein O-mannosyltransferase 1.